We begin with the raw amino-acid sequence, 853 residues long: Envelope glycoprotein gp160 (853 aa).

An N-terminal signal peptide occupies residues 1–31; it reads MRARGIERNCQNWWKWGIMLLGILMTCSAAD. Topologically, residues 32-681 are extracellular; the sequence is NLWVTVYYGV…ITQWLWYIKI (650 aa). Cys53 and Cys73 are oxidised to a cystine. N-linked (GlcNAc...) asparagine; by host glycans are attached at residues Asn87, Asn129, Asn137, Asn143, Asn153, Asn157, Asn183, Asn188, Asn198, Asn235, Asn242, Asn263, Asn277, and Asn290. 5 cysteine pairs are disulfide-bonded: Cys118–Cys206, Cys125–Cys197, Cys130–Cys154, Cys219–Cys248, and Cys229–Cys240. The interval 130-153 is V1; sequence CSDELRNNGTMGNNVTTEEKGMKN. Residues 154-197 form a V2 region; that stretch reads CSFNVTTVLKDKKQQVYALFYRLDIVPIDNDSSTNSTNYRLINC. The V3 stretch occupies residues 297–329; sequence CARPYQNTRQRTPIGLGQSLYTTRSRSIIGQAH. Residues Cys297 and Cys330 are joined by a disulfide bond. N-linked (GlcNAc...) asparagine; by host glycans are attached at residues Asn331 and Asn353. Residues 362–372 form a CD4-binding loop region; it reads SSGGDPEITTH. 2 disulfide bridges follow: Cys376–Cys442 and Cys383–Cys416. The interval 383–416 is V4; that stretch reads CNTSGLFNSTWNISAWNNITESNNSTNTNITLQC. Asn384, Asn390, Asn394, Asn400, Asn405, Asn406, Asn411, Asn445, Asn458, Asn459, and Asn462 each carry an N-linked (GlcNAc...) asparagine; by host glycan. V5 regions lie at residues 457–468 and 460–468; these read INNSTNETFRPG and STNETFRPG. The fusion peptide stretch occupies residues 509–529; it reads AIGLGAMFLGFLGAAGSTMGA. Residues 571–589 are immunosuppression; the sequence is KQLQARILAVERYLKDQQL. Cys595 and Cys601 are disulfide-bonded. N-linked (GlcNAc...) asparagine; by host glycosylation is found at Asn608, Asn613, Asn622, and Asn634. Positions 630–664 form a coiled coil; that stretch reads REIDNYTGLIYSLIEESQTQQEKNEKELLELDKWA. Residues 659 to 680 are MPER; binding to GalCer; the sequence is ELDKWASLWNWFSITQWLWYIK. Residues 682-702 form a helical membrane-spanning segment; sequence FIMIIGGLIGLRIVFAVLSLV. Residues 703-853 are Cytoplasmic-facing; that stretch reads NRVRQGYSPL…IRQGLERSLL (151 aa). Positions 709 to 712 match the YXXL motif; contains endocytosis signal motif; that stretch reads YSPL. Residues 716–738 form a disordered region; it reads TLLPAPRGPDRPEGTEEEGGERG. Residues 723 to 738 are compositionally biased toward basic and acidic residues; that stretch reads GPDRPEGTEEEGGERG. S-palmitoyl cysteine; by host attachment occurs at residues Cys761 and Cys834. Residues 852–853 carry the Di-leucine internalization motif motif; sequence LL.

The protein belongs to the HIV-1 env protein family. In terms of assembly, the mature envelope protein (Env) consists of a homotrimer of non-covalently associated gp120-gp41 heterodimers. The resulting complex protrudes from the virus surface as a spike. There seems to be as few as 10 spikes on the average virion. Interacts with host CD4, CCR5 and CXCR4. Gp120 also interacts with the C-type lectins CD209/DC-SIGN and CLEC4M/DC-SIGNR (collectively referred to as DC-SIGN(R)). Gp120 and gp41 interact with GalCer. Gp120 interacts with host ITGA4/ITGB7 complex; on CD4+ T-cells, this interaction results in rapid activation of integrin ITGAL/LFA-1, which facilitates efficient cell-to-cell spreading of HIV-1. Gp120 interacts with cell-associated heparan sulfate; this interaction increases virus infectivity on permissive cells and may be involved in infection of CD4- cells. The mature envelope protein (Env) consists of a homotrimer of non-covalently associated gp120-gp41 heterodimers. The resulting complex protrudes from the virus surface as a spike. There seems to be as few as 10 spikes on the average virion. Post-translationally, highly glycosylated by host. The high number of glycan on the protein is reffered to as 'glycan shield' because it contributes to hide protein sequence from adaptive immune system. In terms of processing, palmitoylation of the transmembrane protein and of Env polyprotein (prior to its proteolytic cleavage) is essential for their association with host cell membrane lipid rafts. Palmitoylation is therefore required for envelope trafficking to classical lipid rafts, but not for viral replication. Specific enzymatic cleavages in vivo yield mature proteins. Envelope glycoproteins are synthesized as an inactive precursor that is heavily N-glycosylated and processed likely by host cell furin in the Golgi to yield the mature SU and TM proteins. The cleavage site between SU and TM requires the minimal sequence [KR]-X-[KR]-R. About 2 of the 9 disulfide bonds of gp41 are reduced by P4HB/PDI, following binding to CD4 receptor.

The protein localises to the virion membrane. The protein resides in the host cell membrane. It is found in the host endosome membrane. In terms of biological role, oligomerizes in the host endoplasmic reticulum into predominantly trimers. In a second time, gp160 transits in the host Golgi, where glycosylation is completed. The precursor is then proteolytically cleaved in the trans-Golgi and thereby activated by cellular furin or furin-like proteases to produce gp120 and gp41. Functionally, attaches the virus to the host lymphoid cell by binding to the primary receptor CD4. This interaction induces a structural rearrangement creating a high affinity binding site for a chemokine coreceptor like CXCR4 and/or CCR5. Acts as a ligand for CD209/DC-SIGN and CLEC4M/DC-SIGNR, which are respectively found on dendritic cells (DCs), and on endothelial cells of liver sinusoids and lymph node sinuses. These interactions allow capture of viral particles at mucosal surfaces by these cells and subsequent transmission to permissive cells. HIV subverts the migration properties of dendritic cells to gain access to CD4+ T-cells in lymph nodes. Virus transmission to permissive T-cells occurs either in trans (without DCs infection, through viral capture and transmission), or in cis (following DCs productive infection, through the usual CD4-gp120 interaction), thereby inducing a robust infection. In trans infection, bound virions remain infectious over days and it is proposed that they are not degraded, but protected in non-lysosomal acidic organelles within the DCs close to the cell membrane thus contributing to the viral infectious potential during DCs' migration from the periphery to the lymphoid tissues. On arrival at lymphoid tissues, intact virions recycle back to DCs' cell surface allowing virus transmission to CD4+ T-cells. Acts as a class I viral fusion protein. Under the current model, the protein has at least 3 conformational states: pre-fusion native state, pre-hairpin intermediate state, and post-fusion hairpin state. During fusion of viral and target intracellular membranes, the coiled coil regions (heptad repeats) assume a trimer-of-hairpins structure, positioning the fusion peptide in close proximity to the C-terminal region of the ectodomain. The formation of this structure appears to drive apposition and subsequent fusion of viral and target cell membranes. Complete fusion occurs in host cell endosomes and is dynamin-dependent, however some lipid transfer might occur at the plasma membrane. The virus undergoes clathrin-dependent internalization long before endosomal fusion, thus minimizing the surface exposure of conserved viral epitopes during fusion and reducing the efficacy of inhibitors targeting these epitopes. Membranes fusion leads to delivery of the nucleocapsid into the cytoplasm. The chain is Envelope glycoprotein gp160 from Human immunodeficiency virus type 1 group M subtype D (isolate ELI) (HIV-1).